We begin with the raw amino-acid sequence, 465 residues long: GTPase Der (465 aa).

2 consecutive EngA-type G domains span residues P3–S167 and I179–L352. GTP contacts are provided by residues G9–S16, D57–M61, N119–D122, G185–S192, D232–L236, and N297–D300. In terms of domain architecture, KH-like spans R353–D437.

Belongs to the TRAFAC class TrmE-Era-EngA-EngB-Septin-like GTPase superfamily. EngA (Der) GTPase family. Associates with the 50S ribosomal subunit.

Its function is as follows. GTPase that plays an essential role in the late steps of ribosome biogenesis. In Xylella fastidiosa (strain M23), this protein is GTPase Der.